The primary structure comprises 182 residues: PTS system glucitol/sorbitol-specific EIIC component (182 aa).

The PTS EIIC type-5 domain occupies 1–182 (MDAIVYFAKG…IELSNQLKAN (182 aa)). A run of 3 helical transmembrane segments spans residues 28–48 (GIIP…AFIG), 63–83 (VILA…NPMA), and 139–159 (TALG…AGWV).

It localises to the cell membrane. Its function is as follows. The phosphoenolpyruvate-dependent sugar phosphotransferase system (PTS), a major carbohydrate active transport system, catalyzes the phosphorylation of incoming sugar substrates concomitant with their translocation across the cell membrane. The enzyme II complex composed of SrlA, SrlB and SrlE is involved in glucitol/sorbitol transport. This chain is PTS system glucitol/sorbitol-specific EIIC component (srlA), found in Clostridium beijerinckii (strain ATCC 51743 / NCIMB 8052) (Clostridium acetobutylicum).